Consider the following 267-residue polypeptide: MTRRNNGHSARFLVASASWFSHHSGMIREPSRDRPGRSPAVAPSFQHERALLKRGVWPVAGCDEVGRGPLAGPVVAAAVVLDPKRIPKGIDDSKRLTAARREELFEEITATASFAVAFASTARIDRDNILRASLWALARAVHALPDMPRHVFVDGRDRIEIACACEPVIGGDGIVLSIAAASIVAKVTRDRLMCKLAQDCPGYGFETHKGYGVPAHLEALGRLGPSPHHRSFFAPVVAARERHRAPPIGESASATETSAGISIEATI.

The RNase H type-2 domain occupies 57 to 245; it reads WPVAGCDEVG…VVAARERHRA (189 aa). A divalent metal cation is bound by residues Asp-63, Glu-64, and Asp-154.

This sequence belongs to the RNase HII family. Mn(2+) is required as a cofactor. Mg(2+) serves as cofactor.

It is found in the cytoplasm. It carries out the reaction Endonucleolytic cleavage to 5'-phosphomonoester.. In terms of biological role, endonuclease that specifically degrades the RNA of RNA-DNA hybrids. The polypeptide is Ribonuclease HII (Nitrobacter hamburgensis (strain DSM 10229 / NCIMB 13809 / X14)).